A 299-amino-acid polypeptide reads, in one-letter code: MEPNPIFSEFQLEFFKRIKMQPKSIETLNDVSEVMSGCAQIFSFENLDVVANTTEPLNREVIIQQLVNNKQGGLCYKINSVFYYFIKSFGFNIYQVRCCVENQETHDCWQINGAHIINIIEYENKKYLADVAFGCNLSYEPIPFSEEIIESCTGLYRIRKVDNIIRDIKYTYLLEFKKPDSFSPESARLWTNGYAFDPLVKAIDIDENDKIDSHATQIQQLIIDDPTKEFSVKPLATKVVNNESIATLTSNSFTLTNCKTGEKTKVTFDINNEIKQLEQFNQHLISIFNLPPLKFLPKI.

The active-site Acyl-thioester intermediate is the Cys75. Catalysis depends on residues His115 and Asp130.

The protein belongs to the arylamine N-acetyltransferase family.

It carries out the reaction an arylamine + acetyl-CoA = an N-acetylarylamine + CoA. The protein is Probable arylamine N-acetyltransferase 2 of Dictyostelium discoideum (Social amoeba).